A 55-amino-acid chain; its full sequence is Large ribosomal subunit protein bL33 (55 aa).

The protein belongs to the bacterial ribosomal protein bL33 family.

In Allorhizobium ampelinum (strain ATCC BAA-846 / DSM 112012 / S4) (Agrobacterium vitis (strain S4)), this protein is Large ribosomal subunit protein bL33.